The sequence spans 599 residues: Aspartate--tRNA(Asp/Asn) ligase (599 aa).

Glu-180 contributes to the L-aspartate binding site. Residues Gln-204 to Lys-207 are aspartate. Arg-226 lines the L-aspartate pocket. ATP contacts are provided by residues Arg-226 to Glu-228 and Gln-235. His-457 contacts L-aspartate. Glu-491 is a binding site for ATP. Arg-498 is a binding site for L-aspartate. Residue Gly-543 to Arg-546 coordinates ATP. The disordered stretch occupies residues Lys-565 to Asn-599. Over residues Val-590–Asn-599 the composition is skewed to acidic residues.

Belongs to the class-II aminoacyl-tRNA synthetase family. Type 1 subfamily. As to quaternary structure, homodimer.

Its subcellular location is the cytoplasm. It carries out the reaction tRNA(Asx) + L-aspartate + ATP = L-aspartyl-tRNA(Asx) + AMP + diphosphate. Aspartyl-tRNA synthetase with relaxed tRNA specificity since it is able to aspartylate not only its cognate tRNA(Asp) but also tRNA(Asn). Reaction proceeds in two steps: L-aspartate is first activated by ATP to form Asp-AMP and then transferred to the acceptor end of tRNA(Asp/Asn). The protein is Aspartate--tRNA(Asp/Asn) ligase of Bifidobacterium longum (strain NCC 2705).